We begin with the raw amino-acid sequence, 429 residues long: Enolase (429 aa).

Gln-163 contributes to the (2R)-2-phosphoglycerate binding site. The Proton donor role is filled by Glu-205. Residues Asp-242, Glu-285, and Asp-312 each coordinate Mg(2+). The (2R)-2-phosphoglycerate site is built by Lys-337, Arg-366, Ser-367, and Lys-388. The Proton acceptor role is filled by Lys-337.

Belongs to the enolase family. Requires Mg(2+) as cofactor.

The protein resides in the cytoplasm. It localises to the secreted. The protein localises to the cell surface. It carries out the reaction (2R)-2-phosphoglycerate = phosphoenolpyruvate + H2O. Its pathway is carbohydrate degradation; glycolysis; pyruvate from D-glyceraldehyde 3-phosphate: step 4/5. Its function is as follows. Catalyzes the reversible conversion of 2-phosphoglycerate (2-PG) into phosphoenolpyruvate (PEP). It is essential for the degradation of carbohydrates via glycolysis. The sequence is that of Enolase from Oceanobacillus iheyensis (strain DSM 14371 / CIP 107618 / JCM 11309 / KCTC 3954 / HTE831).